Consider the following 266-residue polypeptide: tRNA pseudouridine synthase A (266 aa).

The Nucleophile role is filled by Asp55. Tyr110 serves as a coordination point for substrate.

The protein belongs to the tRNA pseudouridine synthase TruA family.

It catalyses the reaction uridine(38/39/40) in tRNA = pseudouridine(38/39/40) in tRNA. In terms of biological role, formation of pseudouridine at positions 38, 39 and 40 in the anticodon stem and loop of transfer RNAs. In Thermococcus sibiricus (strain DSM 12597 / MM 739), this protein is tRNA pseudouridine synthase A.